The chain runs to 767 residues: Photosystem I P700 chlorophyll a apoprotein A1 (767 aa).

Residues methionine 1 to alanine 22 form a disordered region. Positions serine 8–alanine 22 are enriched in basic and acidic residues. Transmembrane regions (helical) follow at residues isoleucine 76–alanine 99, leucine 162–histidine 185, leucine 201–alanine 225, valine 309–tyrosine 327, arginine 368–tyrosine 391, leucine 407–valine 433, alanine 455–histidine 477, and leucine 558–leucine 576. [4Fe-4S] cluster-binding residues include cysteine 600 and cysteine 609. 2 helical membrane-spanning segments follow: residues histidine 616–tryptophan 637 and isoleucine 681–phenylalanine 703. A divinylchlorophyll a'-binding site is contributed by histidine 692. Divinyl chlorophyll a is bound by residues methionine 700 and tyrosine 708. Phylloquinone is bound at residue tryptophan 709. A helical transmembrane segment spans residues alanine 741–alanine 761.

The protein belongs to the PsaA/PsaB family. The PsaA/B heterodimer binds the P700 divinyl chlorophyll special pair and subsequent electron acceptors. PSI consists of a core antenna complex that captures photons, and an electron transfer chain that converts photonic excitation into a charge separation. The cyanobacterial PSI reaction center is composed of one copy each of PsaA,B,C,D,E,F,I,J,K,L,M and X, and forms trimeric complexes. Requires PSI electron transfer chain: 5 divinyl chlorophyll a, 1 divinyl chlorophyll a', 2 phylloquinones and 3 4Fe-4S clusters. PSI core antenna: 90 divinyl chlorophyll a, 22 carotenoids, 3 phospholipids and 1 galactolipid. P700 is a divinyl chlorophyll a/divinyl chlorophyll a' dimer, A0 is one or more divinyl chlorophyll a, A1 is one or both phylloquinones and FX is a shared 4Fe-4S iron-sulfur center. as cofactor.

It is found in the cellular thylakoid membrane. The enzyme catalyses reduced [plastocyanin] + hnu + oxidized [2Fe-2S]-[ferredoxin] = oxidized [plastocyanin] + reduced [2Fe-2S]-[ferredoxin]. PsaA and PsaB bind P700, the primary electron donor of photosystem I (PSI), as well as the electron acceptors A0, A1 and FX. PSI is a plastocyanin/cytochrome c6-ferredoxin oxidoreductase, converting photonic excitation into a charge separation, which transfers an electron from the donor P700 chlorophyll pair to the spectroscopically characterized acceptors A0, A1, FX, FA and FB in turn. Oxidized P700 is reduced on the lumenal side of the thylakoid membrane by plastocyanin or cytochrome c6. The polypeptide is Photosystem I P700 chlorophyll a apoprotein A1 (Prochlorococcus marinus (strain AS9601)).